Reading from the N-terminus, the 241-residue chain is Pyridoxine 5'-phosphate synthase (241 aa).

Asn7 lines the 3-amino-2-oxopropyl phosphate pocket. 9 to 10 (DH) contacts 1-deoxy-D-xylulose 5-phosphate. Arg18 provides a ligand contact to 3-amino-2-oxopropyl phosphate. The Proton acceptor role is filled by His43. 1-deoxy-D-xylulose 5-phosphate is bound by residues Arg45 and His50. The active-site Proton acceptor is the Glu70. Thr100 is a binding site for 1-deoxy-D-xylulose 5-phosphate. Catalysis depends on His191, which acts as the Proton donor. 3-amino-2-oxopropyl phosphate is bound by residues Gly192 and 213 to 214 (GH).

The protein belongs to the PNP synthase family. As to quaternary structure, homooctamer; tetramer of dimers.

It is found in the cytoplasm. It carries out the reaction 3-amino-2-oxopropyl phosphate + 1-deoxy-D-xylulose 5-phosphate = pyridoxine 5'-phosphate + phosphate + 2 H2O + H(+). It participates in cofactor biosynthesis; pyridoxine 5'-phosphate biosynthesis; pyridoxine 5'-phosphate from D-erythrose 4-phosphate: step 5/5. In terms of biological role, catalyzes the complicated ring closure reaction between the two acyclic compounds 1-deoxy-D-xylulose-5-phosphate (DXP) and 3-amino-2-oxopropyl phosphate (1-amino-acetone-3-phosphate or AAP) to form pyridoxine 5'-phosphate (PNP) and inorganic phosphate. This Maridesulfovibrio salexigens (strain ATCC 14822 / DSM 2638 / NCIMB 8403 / VKM B-1763) (Desulfovibrio salexigens) protein is Pyridoxine 5'-phosphate synthase.